A 350-amino-acid chain; its full sequence is Ribosomal RNA large subunit methyltransferase M (350 aa).

S-adenosyl-L-methionine-binding positions include 217–220, Asp-236, Asp-256, and Asp-272; that span reads APGG. The Proton acceptor role is filled by Lys-301.

Belongs to the class I-like SAM-binding methyltransferase superfamily. RNA methyltransferase RlmE family. RlmM subfamily. As to quaternary structure, monomer.

It is found in the cytoplasm. The catalysed reaction is cytidine(2498) in 23S rRNA + S-adenosyl-L-methionine = 2'-O-methylcytidine(2498) in 23S rRNA + S-adenosyl-L-homocysteine + H(+). Its function is as follows. Catalyzes the 2'-O-methylation at nucleotide C2498 in 23S rRNA. This chain is Ribosomal RNA large subunit methyltransferase M, found in Cellvibrio japonicus (strain Ueda107) (Pseudomonas fluorescens subsp. cellulosa).